Reading from the N-terminus, the 267-residue chain is Methylglyoxal reductase DkgB (267 aa).

Y39 acts as the Proton donor in catalysis. Residue H97 participates in substrate binding. Residue 179–231 (MTLAYGKALKDEVIARIAAKHNATPAQVILAWAMGEGYSVIPSSTKRENLESN) coordinates NADP(+).

Belongs to the aldo/keto reductase family. As to quaternary structure, monomer.

The protein resides in the cytoplasm. It catalyses the reaction hydroxyacetone + NADP(+) = methylglyoxal + NADPH + H(+). In terms of biological role, aldo-keto reductase that significantly contributes to cellular methylglyoxal detoxification by catalyzing the NADPH-dependent conversion of methylglyoxal to acetol. This chain is Methylglyoxal reductase DkgB, found in Escherichia coli O157:H7.